The primary structure comprises 304 residues: Acetyl-coenzyme A carboxylase carboxyl transferase subunit beta (304 aa).

In terms of domain architecture, CoA carboxyltransferase N-terminal spans 23–292 (VWTKCDSCGQ…PNPDAPREGV (270 aa)). Residues C27, C30, C46, and C49 each contribute to the Zn(2+) site. A C4-type zinc finger spans residues 27–49 (CDSCGQVLYRAELERNLEVCPKC). The segment at 284–304 (NPDAPREGVVVPPAPGQESEA) is disordered.

This sequence belongs to the AccD/PCCB family. In terms of assembly, acetyl-CoA carboxylase is a heterohexamer composed of biotin carboxyl carrier protein (AccB), biotin carboxylase (AccC) and two subunits each of ACCase subunit alpha (AccA) and ACCase subunit beta (AccD). The cofactor is Zn(2+).

It localises to the cytoplasm. It catalyses the reaction N(6)-carboxybiotinyl-L-lysyl-[protein] + acetyl-CoA = N(6)-biotinyl-L-lysyl-[protein] + malonyl-CoA. Its pathway is lipid metabolism; malonyl-CoA biosynthesis; malonyl-CoA from acetyl-CoA: step 1/1. Component of the acetyl coenzyme A carboxylase (ACC) complex. Biotin carboxylase (BC) catalyzes the carboxylation of biotin on its carrier protein (BCCP) and then the CO(2) group is transferred by the transcarboxylase to acetyl-CoA to form malonyl-CoA. This is Acetyl-coenzyme A carboxylase carboxyl transferase subunit beta from Salmonella arizonae (strain ATCC BAA-731 / CDC346-86 / RSK2980).